The following is an 80-amino-acid chain: Defensin-like protein 291 (80 aa).

Positions 1–29 are cleaved as a signal peptide; sequence MAASKTTIFIVFVLCLSCTLLVNISGIQA. Intrachain disulfides connect cysteine 50/cysteine 70, cysteine 56/cysteine 75, and cysteine 62/cysteine 77.

Belongs to the DEFL family.

The protein resides in the secreted. In Arabidopsis thaliana (Mouse-ear cress), this protein is Defensin-like protein 291.